We begin with the raw amino-acid sequence, 535 residues long: Alpha-1,3-mannosyl-glycoprotein 4-beta-N-acetylglucosaminyltransferase A (535 aa).

Topologically, residues 1–6 (MRLRNG) are cytoplasmic. Residues 7–27 (TVATVLAFITSFLTLSWYTTW) traverse the membrane as a helical; Signal-anchor for type II membrane protein segment. The Lumenal segment spans residues 28-535 (QNGKEKVIAY…NEIHIKKVTN (508 aa)). The stretch at 31 to 57 (KEKVIAYQREFLALKERLRIAEHRISQ) forms a coiled coil. Residues asparagine 77 and asparagine 458 are each glycosylated (N-linked (GlcNAc...) asparagine). Serine 474 is subject to Phosphoserine.

It belongs to the glycosyltransferase 54 family. It depends on a divalent metal cation as a cofactor. In terms of processing, N-glycosylated. As to expression, highly expressed in small intestine, kidney, lung and spleen. Weakly expressed in brain, heart and liver.

It is found in the golgi apparatus membrane. The protein localises to the secreted. The catalysed reaction is N(4)-{beta-D-GlcNAc-(1-&gt;2)-alpha-D-Man-(1-&gt;3)-[beta-D-GlcNAc-(1-&gt;2)-alpha-D-Man-(1-&gt;6)]-beta-D-Man-(1-&gt;4)-beta-D-GlcNAc-(1-&gt;4)-beta-D-GlcNAc}-L-asparaginyl-[protein] + UDP-N-acetyl-alpha-D-glucosamine = N(4)-{beta-D-GlcNAc-(1-&gt;2)-[beta-D-GlcNAc-(1-&gt;4)]-alpha-D-Man-(1-&gt;3)-[beta-D-GlcNAc-(1-&gt;2)-alpha-D-Man-(1-&gt;6)]-beta-D-Man-(1-&gt;4)-beta-D-GlcNAc-(1-&gt;4)-beta-D-GlcNAc}-L-asparaginyl-[protein] + UDP + H(+). It catalyses the reaction an N(4)-{beta-D-GlcNAc-(1-&gt;2)-alpha-D-Man-(1-&gt;3)-[alpha-D-Man-(1-&gt;6)]-beta-D-Man-(1-&gt;4)-beta-D-GlcNAc-(1-&gt;4)-beta-D-GlcNAc}-L-asparaginyl-[protein] + UDP-N-acetyl-alpha-D-glucosamine = an N(4)-{beta-D-GlcNAc-(1-&gt;2)-[beta-D-GlcNAc-(1-&gt;4)]-alpha-D-Man-(1-&gt;3)-[alpha-D-Man-(1-&gt;6)]-beta-D-Man-(1-&gt;4)-beta-D-GlcNAc-(1-&gt;4)-beta-D-GlcNAc}-L-asparaginyl-[protein] + UDP + H(+). It carries out the reaction an N(4)-{beta-D-GlcNAc-(1-&gt;2)-alpha-D-Man-(1-&gt;3)-[beta-D-GlcNAc-(1-&gt;2)-[beta-D-GlcNAc-(1-&gt;6)]-alpha-D-Man-(1-&gt;6)]-beta-D-Man-(1-&gt;4)-beta-D-GlcNAc-(1-&gt;4)-beta-D-GlcNAc}-L-asparaginyl-[protein] + UDP-N-acetyl-alpha-D-glucosamine = an N(4)-{beta-D-GlcNAc-(1-&gt;2)-[beta-D-GlcNAc-(1-&gt;4)]-alpha-D-Man-(1-&gt;3)-[beta-D-GlcNAc-(1-&gt;2)-[beta-D-GlcNAc-(1-&gt;6)]-alpha-D-Man-(1-&gt;6)]-beta-D-Man-(1-&gt;4)-beta-D-GlcNAc-(1-&gt;4)-beta-D-GlcNAc}-L-asparaginyl-[protein] + UDP + H(+). The enzyme catalyses an N(4)-{beta-D-GlcNAc-(1-&gt;2)-alpha-D-Man-(1-&gt;3)-[beta-D-GlcNAc-(1-&gt;2)-alpha-D-Man-(1-&gt;6)]-beta-D-Man-(1-&gt;4)-beta-D-GlcNAc-(1-&gt;4)-[alpha-L-Fuc-(1-&gt;6)]-beta-D-GlcNAc}-L-asparaginyl-[protein] + UDP-N-acetyl-alpha-D-glucosamine = N(4)-{beta-D-GlcNAc-(1-&gt;2)-[beta-D-GlcNAc-(1-&gt;4)]-alpha-D-Man-(1-&gt;3)-[beta-D-GlcNAc-(1-&gt;2)-alpha-D-Man-(1-&gt;6)]-beta-D-Man-(1-&gt;4)-beta-D-GlcNAc-(1-&gt;4)-[alpha-L-Fuc-(1-&gt;6)]-beta-D-GlcNAc}-asparaginyl-[protein] + UDP + H(+). The catalysed reaction is an N(4)-{beta-D-GlcNAc-(1-&gt;2)-alpha-D-Man-(1-&gt;3)-[beta-D-Gal-(1-&gt;4)-beta-D-GlcNAc-(1-&gt;2)-alpha-D-Man-(1-&gt;6)]-beta-D-Man-(1-&gt;4)-beta-D-GlcNAc-(1-&gt;4)-beta-D-GlcNAc}-L-asparaginyl-[protein] + UDP-N-acetyl-alpha-D-glucosamine = an N(4)-{beta-D-GlcNAc-(1-&gt;2)-[beta-D-GlcNAc-(1-&gt;4)]-alpha-D-Man-(1-&gt;3)-[beta-D-Gal-(1-&gt;4)-beta-D-GlcNAc-(1-&gt;2)-alpha-D-Man-(1-&gt;6)]-beta-D-Man-(1-&gt;4)-beta-D-GlcNAc-(1-&gt;4)-beta-D-GlcNAc}-L-asparaginyl-[protein] + UDP + H(+). It catalyses the reaction N(4)-{beta-D-GlcNAc-(1-&gt;2)-alpha-D-Man-(1-&gt;3)-[alpha-D-Man-(1-&gt;3)-{alpha-D-Man-(1-&gt;6)}-alpha-D-Man-(1-&gt;6)]-beta-D-Man-(1-&gt;4)-beta-D-GlcNAc-(1-&gt;4)-beta-D-GlcNAc}-asparaginyl-[protein] + UDP-N-acetyl-alpha-D-glucosamine = N(4)-{beta-D-GlcNAc-(1-&gt;2)-[beta-D-GlcNAc-(1-&gt;4)]-alpha-D-Man-(1-&gt;3)-[alpha-D-Man-(1-&gt;3)-{alpha-D-Man-(1-&gt;6)}-alpha-D-Man-(1-&gt;6)]-beta-D-Man-(1-&gt;4)-beta-D-GlcNAc-(1-&gt;4)-beta-D-GlcNAc}-asparaginyl-[protein] + UDP + H(+). It carries out the reaction N(4)-{beta-D-GlcNAc-(1-&gt;2)-alpha-D-Man-(1-&gt;3)-beta-D-Man-(1-&gt;4)-beta-D-GlcNAc-(1-&gt;4)-beta-D-GlcNAc}-asparaginyl-[protein] + UDP-N-acetyl-alpha-D-glucosamine = N(4)-{beta-D-GlcNAc-(1-&gt;2)-[beta-D-GlcNAc-(1-&gt;4)]-alpha-D-Man-(1-&gt;3)-beta-D-Man-(1-&gt;4)-beta-D-GlcNAc-(1-&gt;4)-beta-D-GlcNAc}-asparaginyl-[protein] + UDP + H(+). Its pathway is protein modification; protein glycosylation. Inhibited by UDP. Its function is as follows. Glycosyltransferase that catalyze the transfer of GlcNAc from UDP-GlcNAc to the GlcNAcbeta1-2Manalpha1-3 arm of the core structure of N-linked glycans through a beta1-4 linkage and participates in the production of tri- and tetra-antennary N-linked sugar chains. Involved in glucose transport by mediating SLC2A2/GLUT2 glycosylation, thereby controlling cell-surface expression of SLC2A2 in pancreatic beta cells. In Bos taurus (Bovine), this protein is Alpha-1,3-mannosyl-glycoprotein 4-beta-N-acetylglucosaminyltransferase A.